The primary structure comprises 340 residues: Myomesin-1 (340 aa).

A disordered region spans residues Ala177–Arg212. Residues Thr197–Gly206 are compositionally biased toward acidic residues.

As to quaternary structure, homodimer. Interacts with TTN/titin and PNKD. Seems to be expressed in all cardiac and skeletal fibers.

The protein resides in the cytoplasm. Its subcellular location is the myofibril. It localises to the sarcomere. It is found in the m line. Its function is as follows. Major component of the vertebrate myofibrillar M band. Binds myosin, titin, and light meromyosin. This binding is dose dependent. This Bos taurus (Bovine) protein is Myomesin-1 (MYOM1).